Consider the following 489-residue polypeptide: Rhamnulokinase (489 aa).

Ala13–Arg17 provides a ligand contact to ATP. The cysteines at positions 68 and 222 are disulfide-linked. Residues Gly83 and His236–Thr238 contribute to the substrate site. Asp237 acts as the Proton acceptor in catalysis. Position 259 (Thr259) interacts with ATP. Asn296 is a substrate binding site. Gln304 lines the ATP pocket. Cys353 and Cys370 are oxidised to a cystine. Gly402 is an ATP binding site. Cys413 and Cys417 are disulfide-bonded.

It belongs to the rhamnulokinase family. Monomer. Requires Mg(2+) as cofactor.

The enzyme catalyses L-rhamnulose + ATP = L-rhamnulose 1-phosphate + ADP + H(+). Its pathway is carbohydrate degradation; L-rhamnose degradation; glycerone phosphate from L-rhamnose: step 2/3. Involved in the catabolism of L-rhamnose (6-deoxy-L-mannose). Catalyzes the transfer of the gamma-phosphate group from ATP to the 1-hydroxyl group of L-rhamnulose to yield L-rhamnulose 1-phosphate. The protein is Rhamnulokinase of Escherichia coli O1:K1 / APEC.